A 381-amino-acid chain; its full sequence is Peptidoglycan glycosyltransferase MrdB (381 aa).

Helical transmembrane passes span Phe-11–Phe-31, Lys-40–Phe-60, Trp-66–Ser-86, Ile-102–Ile-122, Tyr-132–Leu-152, Asp-156–Leu-176, Val-180–His-200, Phe-263–Phe-283, Ile-297–Thr-317, and Leu-328–Leu-348.

Belongs to the SEDS family. MrdB/RodA subfamily.

It localises to the cell inner membrane. The enzyme catalyses [GlcNAc-(1-&gt;4)-Mur2Ac(oyl-L-Ala-gamma-D-Glu-L-Lys-D-Ala-D-Ala)](n)-di-trans,octa-cis-undecaprenyl diphosphate + beta-D-GlcNAc-(1-&gt;4)-Mur2Ac(oyl-L-Ala-gamma-D-Glu-L-Lys-D-Ala-D-Ala)-di-trans,octa-cis-undecaprenyl diphosphate = [GlcNAc-(1-&gt;4)-Mur2Ac(oyl-L-Ala-gamma-D-Glu-L-Lys-D-Ala-D-Ala)](n+1)-di-trans,octa-cis-undecaprenyl diphosphate + di-trans,octa-cis-undecaprenyl diphosphate + H(+). It participates in cell wall biogenesis; peptidoglycan biosynthesis. Its function is as follows. Peptidoglycan polymerase that is essential for cell wall elongation. The protein is Peptidoglycan glycosyltransferase MrdB of Helicobacter pylori (strain J99 / ATCC 700824) (Campylobacter pylori J99).